The chain runs to 139 residues: Single-stranded DNA-binding protein 2 (139 aa).

The region spanning 1–104 is the SSB domain; it reads MLNRTVLVGR…VVADSVQFLE (104 aa). The interval 103–139 is disordered; sequence LEPKNNNKQNNQQHNGQTQTGNNPFDNTEEDFSDLPF. The segment covering 106–125 has biased composition (low complexity); that stretch reads KNNNKQNNQQHNGQTQTGNN. Residues 129-139 are compositionally biased toward acidic residues; sequence NTEEDFSDLPF.

In terms of assembly, homotetramer.

The protein is Single-stranded DNA-binding protein 2 (ssb-p) of Staphylococcus aureus (strain COL).